Reading from the N-terminus, the 164-residue chain is uncharacterized protein (164 aa).

A disordered region spans residues 1 to 77 (MGQKKTMGTE…PCSIRDAPFH (77 aa)).

This is an uncharacterized protein from Homo sapiens (Human).